The sequence spans 384 residues: 2-isopropylmalate synthase 2 (384 aa).

Residues 9–260 (VYIVDTTLRD…DLGIDTSRFR (252 aa)) enclose the Pyruvate carboxyltransferase domain. Mn(2+)-binding residues include D18, H198, H200, and N234.

This sequence belongs to the alpha-IPM synthase/homocitrate synthase family. LeuA type 1 subfamily. Homodimer. It depends on Mn(2+) as a cofactor.

It is found in the cytoplasm. It catalyses the reaction 3-methyl-2-oxobutanoate + acetyl-CoA + H2O = (2S)-2-isopropylmalate + CoA + H(+). It participates in amino-acid biosynthesis; L-leucine biosynthesis; L-leucine from 3-methyl-2-oxobutanoate: step 1/4. In terms of biological role, catalyzes the condensation of the acetyl group of acetyl-CoA with 3-methyl-2-oxobutanoate (2-ketoisovalerate) to form 3-carboxy-3-hydroxy-4-methylpentanoate (2-isopropylmalate). The chain is 2-isopropylmalate synthase 2 from Caldanaerobacter subterraneus subsp. tengcongensis (strain DSM 15242 / JCM 11007 / NBRC 100824 / MB4) (Thermoanaerobacter tengcongensis).